Consider the following 81-residue polypeptide: MALMYPFHVAQPPLNWSEHLWVSEVSPAKESFITTICEHRQAQWDNQDLLRHLQDSVAILTREDQRHVNAVHAAANMPANP.

In terms of assembly, the APC/C is probably composed of at least 12 subunits: apc-2, apc-10, apc-11, cdc-26, emb-1, emb-27, emb-30, mat-1, mat-2, mat-3, such-1 and gfi-3. Expressed in germ cells.

Its pathway is protein modification; protein ubiquitination. Probable component of the anaphase promoting complex/cyclosome (APC/C), a cell cycle-regulated E3 ubiquitin ligase that controls progression through mitosis and the G1 phase of the cell cycle. The APC/C complex acts by mediating ubiquitination and subsequent degradation of target proteins. Developmental role in early embryogenesis and the metaphase to anaphase transition in meiosis and mitosis. May be required for germline proliferation. Required for male tail development and hermaphrodite vulva formation. This chain is Anaphase-promoting complex subunit emb-1, found in Caenorhabditis elegans.